Reading from the N-terminus, the 1729-residue chain is 1,3-beta-glucan synthase component bgs1 (1729 aa).

Ser23 carries the phosphoserine modification. The next 6 membrane-spanning stretches (helical) occupy residues 378 to 398, 416 to 436, 448 to 468, 503 to 523, 546 to 566, and 577 to 597; these read WTAC…AVVF, SMLL…FIFA, LVVG…YSIT, FVSW…SYFF, YILG…LLYL, and YLWY…CLGI. A phosphoserine mark is found at Ser784 and Ser788. Transmembrane regions (helical) follow at residues 1180–1200, 1237–1257, 1337–1357, 1440–1460, 1484–1504, 1515–1535, 1550–1572, and 1678–1698; these read MVIM…GAMY, ILSI…CELG, MLLF…WITL, YGEI…FLFI, VAPL…GIML, YGVY…VVVF, LLGF…ICFL, and ATLY…PFVF.

Belongs to the glycosyltransferase 48 family. As to quaternary structure, component of the 1,3-beta-glucan synthase (GS) complex, composed of at least the alternate catalytic subunits bgs1, bgs2, bgs3, and bgs4, and a regulatory subunit chr4.

It is found in the cell membrane. The protein localises to the cell septum. It carries out the reaction [(1-&gt;3)-beta-D-glucosyl](n) + UDP-alpha-D-glucose = [(1-&gt;3)-beta-D-glucosyl](n+1) + UDP + H(+). In terms of biological role, alternate catalytic subunit of the 1,3-beta-glucan synthase (GS) complex. Synthesizes 1,3-beta-glucan, a major structural component of the fungal cell wall. Required for the assembly of the division septum and maintenance of cell polarity. The polypeptide is 1,3-beta-glucan synthase component bgs1 (bgs1) (Schizosaccharomyces pombe (strain 972 / ATCC 24843) (Fission yeast)).